A 246-amino-acid polypeptide reads, in one-letter code: Myelin protein P0 (246 aa).

The first 27 residues, 1–27 (MFRDLKPAYLFCCSVLYAFSVLRPSQG), serve as a signal peptide directing secretion. Residues 28–143 (ISVSTHHNLH…VGTSSDVHLT (116 aa)) enclose the Ig-like V-type domain. Topologically, residues 28-150 (ISVSTHHNLH…HLTVYDKIPP (123 aa)) are extracellular. Cys48 and Cys125 are disulfide-bonded. An N-linked (GlcNAc...) (complex) asparagine glycan is attached at Asn120. The helical transmembrane segment at 151–178 (VGAGVVSGAIIGTFLGIILLIVGGLYLF) threads the bilayer. The Cytoplasmic segment spans residues 179-246 (RYIVRRRARS…KLSESKRDKK (68 aa)). Residues 200 to 246 (AERGKVSGKAGTVSKGPVLYATLDQSKSGKGASEKKSKLSESKRDKK) are disordered. Basic and acidic residues predominate over residues 231-246 (ASEKKSKLSESKRDKK).

It belongs to the myelin P0 protein family. In terms of processing, N-glycan is sulfated. Found only in peripheral nervous system Schwann cells.

It is found in the cell membrane. Creation of an extracellular membrane face which guides the wrapping process and ultimately compacts adjacent lamellae. The chain is Myelin protein P0 (mpz) from Heterodontus francisci (Horn shark).